The chain runs to 712 residues: Lactoperoxidase (712 aa).

Positions 1–21 are cleaved as a signal peptide; that stretch reads MLVCLHLQVFLASVALFEVAA. A propeptide spanning residues 22–117 is cleaved from the precursor; sequence SDTIAQAAST…TDPSLDLTAL (96 aa). N-linked (GlcNAc...) (complex) asparagine; alternate glycosylation occurs at Asn-106. N-linked (GlcNAc...) (hybrid) asparagine; alternate glycosylation occurs at Asn-106. 4 disulfides stabilise this stretch: Cys-123/Cys-284, Cys-132/Cys-145, Cys-246/Cys-256, and Cys-250/Cys-274. The N-linked (GlcNAc...) (complex) asparagine; alternate glycan is linked to Asn-212. Asn-212 is a glycosylation site (N-linked (GlcNAc...) (hybrid) asparagine; alternate). Asp-225 is a binding site for heme b. Residue His-226 is the Proton acceptor of the active site. Asp-227 serves as a coordination point for Ca(2+). Ca(2+) is bound by residues Thr-301, Phe-303, Asp-305, and Ser-307. Ser-315 is modified (phosphoserine). An N-linked (GlcNAc...) (high mannose) asparagine glycan is attached at Asn-322. A disulfide bridge links Cys-354 with Cys-365. A glycan (N-linked (GlcNAc...) asparagine) is linked at Asn-358. Residue Glu-375 coordinates heme b. Asn-449 carries N-linked (GlcNAc...) (complex) asparagine; alternate glycosylation. The N-linked (GlcNAc...) (hybrid) asparagine; alternate glycan is linked to Asn-449. An N-linked (GlcNAc...) (high mannose) asparagine; alternate glycan is attached at Asn-449. His-468 is a heme b binding site. Tyr-482 bears the 3'-nitrotyrosine mark. 2 cysteine pairs are disulfide-bonded: Cys-573-Cys-630 and Cys-671-Cys-696.

Belongs to the peroxidase family. XPO subfamily. It depends on Ca(2+) as a cofactor. Heme b serves as cofactor. Mammary gland; milk.

Its subcellular location is the secreted. It is found in the cytoplasm. The enzyme catalyses 2 a phenolic donor + H2O2 = 2 a phenolic radical donor + 2 H2O. It carries out the reaction thiocyanate + H2O2 + H(+) = hypothiocyanous acid + H2O. The catalysed reaction is iodide + H2O2 = hypoiodite + H2O. Its activity is regulated as follows. Inhibited by small molecule methimazole (MMZ). Heme-containing oxidoreductase which catalyzes the conversion of thiocyanate (SCN(-)) into antimicrobial agent hypothiocyanous acid (OSCN(-)) in the presence of hydrogen peroxide (H2O2). Also involved in the conversion of iodide (I(-)) into hypoiodite (IO(-)) in the presence of H2O2. Responsible for the inactivation of a wide range of micro-organisms and hence, important component of defense mechanism. Shows antibacterial properties against several Gram-positive bacteria including some Staphylococcus species and Gram-negative bacteria including E.coli, P.aeruginosa and some Salmonella species. Inhibits the growth of several fungi including A.niger, Trichoderma species, C.cassicola, P.meadii and C.salmonicolor. Does not have anti-fungal activity towards C.albicans and Pythium species. May protect the udder from infection and may promote growth in newborns. May be implicated in airway host defense against infection. May contribute to maintaining an appropriate H2O2 cellular level, therefore protecting cells from H2O2-caused injuries and inflammation. This is Lactoperoxidase (LPO) from Capra hircus (Goat).